We begin with the raw amino-acid sequence, 759 residues long: ARF GTPase-activating protein GIT2 (759 aa).

The Arf-GAP domain maps to 1-124; the sequence is MSKRLRSSEV…AFVHRLPCRD (124 aa). The C4-type zinc finger occupies 11 to 34; the sequence is CADCSGPDPSWASVNRGTFLCDEC. ANK repeat units follow at residues 132-161, 166-195, and 199-228; these read DLSKQLHSSVRTGNLETCLRLLSLGAQANF, KGNTPLHVASKAGQILQAELLAVYGADPGT, and SGKTPVDYARQGGHHELAERLVEIQYELTD. The disordered stretch occupies residues 379-422; sequence QHSVESQDNDQPDYDSVASDEDTDLETTASKTNRQKSLDSDLSD. Positions 385-403 are enriched in acidic residues; the sequence is QDNDQPDYDSVASDEDTDL. 2 positions are modified to phosphoserine: S394 and S397. At T401 the chain carries Phosphothreonine. 3 positions are modified to phosphoserine: S415, S418, and S421. Residues 437-478 are a coiled coil; that stretch reads LVASEAKIQQLMKVNNNLSDELRIMQKKLQTLQSENSNLRKQ. Positions 480–499 are enriched in polar residues; that stretch reads TTNVYQVQTGSEYTDTSNHS. 2 disordered regions span residues 480–538 and 554–643; these read TTNV…EESR and VTSS…TEDV. At Y484 the chain carries Phosphotyrosine. Residues 555–569 are compositionally biased toward low complexity; it reads TSSSSLPSFPSTLSW. Phosphoserine is present on residues S559, S562, and S570. Positions 570 to 583 are enriched in basic and acidic residues; sequence SRDESARRASRLEK. Residues 584 to 597 show a composition bias toward polar residues; sequence QNSTPESDYDNTPN. A Phosphothreonine modification is found at T587. Position 614 is a phosphoserine (S614).

As to quaternary structure, may form heterooligomers with GIT1. Directly interacts with protein Piccolo/PCLO. Interacts with PPFIA1 and PPFIA2. Interacts with ARHGEF7. Identified in a complex with ARHGEF6 and BIN2. Interacts with PAK3. Interacts with PXN/paxillin. Interacts with TGFB1I1. Forms a complex with EFNB1 and GRB4/NCK2.

Functionally, GTPase-activating protein for ADP ribosylation factor family members, including ARF1. The polypeptide is ARF GTPase-activating protein GIT2 (GIT2) (Homo sapiens (Human)).